Here is a 211-residue protein sequence, read N- to C-terminus: Thiamine-phosphate synthase (211 aa).

4-amino-2-methyl-5-(diphosphooxymethyl)pyrimidine contacts are provided by residues 40–42 (QLR) and asparagine 72. Residues aspartate 73 and aspartate 92 each contribute to the Mg(2+) site. 4-amino-2-methyl-5-(diphosphooxymethyl)pyrimidine is bound at residue serine 111. Residue 136–138 (TST) coordinates 2-[(2R,5Z)-2-carboxy-4-methylthiazol-5(2H)-ylidene]ethyl phosphate. Residue lysine 139 coordinates 4-amino-2-methyl-5-(diphosphooxymethyl)pyrimidine. 2-[(2R,5Z)-2-carboxy-4-methylthiazol-5(2H)-ylidene]ethyl phosphate contacts are provided by residues glycine 167 and 187-188 (VS).

This sequence belongs to the thiamine-phosphate synthase family. The cofactor is Mg(2+).

The enzyme catalyses 2-[(2R,5Z)-2-carboxy-4-methylthiazol-5(2H)-ylidene]ethyl phosphate + 4-amino-2-methyl-5-(diphosphooxymethyl)pyrimidine + 2 H(+) = thiamine phosphate + CO2 + diphosphate. The catalysed reaction is 2-(2-carboxy-4-methylthiazol-5-yl)ethyl phosphate + 4-amino-2-methyl-5-(diphosphooxymethyl)pyrimidine + 2 H(+) = thiamine phosphate + CO2 + diphosphate. It carries out the reaction 4-methyl-5-(2-phosphooxyethyl)-thiazole + 4-amino-2-methyl-5-(diphosphooxymethyl)pyrimidine + H(+) = thiamine phosphate + diphosphate. The protein operates within cofactor biosynthesis; thiamine diphosphate biosynthesis; thiamine phosphate from 4-amino-2-methyl-5-diphosphomethylpyrimidine and 4-methyl-5-(2-phosphoethyl)-thiazole: step 1/1. Its function is as follows. Condenses 4-methyl-5-(beta-hydroxyethyl)thiazole monophosphate (THZ-P) and 2-methyl-4-amino-5-hydroxymethyl pyrimidine pyrophosphate (HMP-PP) to form thiamine monophosphate (TMP). This chain is Thiamine-phosphate synthase, found in Laribacter hongkongensis (strain HLHK9).